The sequence spans 434 residues: G2/mitotic-specific cyclin-2 (434 aa).

This sequence belongs to the cyclin family. Cyclin AB subfamily. Interacts with the CDC2 protein kinase to form a serine/threonine kinase holoenzyme complex also known as maturation promoting factor (MPF). The cyclin subunit imparts substrate specificity to the complex.

Its function is as follows. Essential for the control of the cell cycle at the G2/M (mitosis) transition. The sequence is that of G2/mitotic-specific cyclin-2 from Medicago sativa subsp. varia (Alfalfa).